Here is a 337-residue protein sequence, read N- to C-terminus: MVLVMDDEESNNVERYDDVVLPGFRFHPTDEELVSFYLKRKVLHKSLPFDLIKKVDIYKYDPWDLPKLAAMGEKEWYFYCPRDRKYRNSTRPNRVTGGGFWKATGTDRPIYSLDSTRCIGLKKSLVFYRGRAAKGVKTDWMMHEFRLPSLSDSHHSSYPNYNNKKQHLNNNNNSKELPSNDAWAICRIFKKTNAVSSQRSIPQSWVYPTIPDNNQQSHNNTATLLASSDVLSHISTRQNFIPSPVNEPASFTESAASYFASQMLGVTYNTARNNGTGDALFLRNNGTGDALVLSNNENNYFNNLTGGLTHEVPNVRSMVMEETTGSEMSATSYSTNN.

An NAC domain is found at 20–191 (VLPGFRFHPT…AWAICRIFKK (172 aa)).

It localises to the nucleus. This is Putative NAC domain-containing protein 94 (ANAC094) from Arabidopsis thaliana (Mouse-ear cress).